The chain runs to 288 residues: 2-hydroxy-6-oxononadienedioate/2-hydroxy-6-oxononatrienedioate hydrolase (288 aa).

His-267 acts as the Proton acceptor in catalysis.

The protein belongs to the AB hydrolase superfamily. MhpC family. As to quaternary structure, homodimer.

The enzyme catalyses (2Z,4E)-2-hydroxy-6-oxonona-2,4-dienedioate + H2O = (2Z)-2-hydroxypenta-2,4-dienoate + succinate + H(+). It catalyses the reaction (2Z,4E,7E)-2-hydroxy-6-oxonona-2,4,7-trienedioate + H2O = (2Z)-2-hydroxypenta-2,4-dienoate + fumarate + H(+). It functions in the pathway aromatic compound metabolism; 3-phenylpropanoate degradation. Functionally, catalyzes the cleavage of the C5-C6 bond of 2-hydroxy-6-oxononadienedioate and 2-hydroxy-6-oxononatrienedioate, a dienol ring fission product of the bacterial meta-cleavage pathway for degradation of phenylpropionic acid. This is 2-hydroxy-6-oxononadienedioate/2-hydroxy-6-oxononatrienedioate hydrolase from Escherichia coli O81 (strain ED1a).